The chain runs to 432 residues: Adenosylhomocysteinase (432 aa).

A disordered region spans residues 1-24 (MSAYSPLSAQLDADTDVDVESTRT). Residues D137 and E162 each coordinate substrate. An NAD(+)-binding site is contributed by 163–165 (TTT). Positions 192 and 196 each coordinate substrate. NAD(+) is bound by residues N197, 226-231 (GYGYCG), E249, N284, 305-307 (AGH), and N352.

Belongs to the adenosylhomocysteinase family. NAD(+) serves as cofactor.

The protein localises to the cytoplasm. It catalyses the reaction S-adenosyl-L-homocysteine + H2O = L-homocysteine + adenosine. It participates in amino-acid biosynthesis; L-homocysteine biosynthesis; L-homocysteine from S-adenosyl-L-homocysteine: step 1/1. In terms of biological role, may play a key role in the regulation of the intracellular concentration of adenosylhomocysteine. The sequence is that of Adenosylhomocysteinase from Haloquadratum walsbyi (strain DSM 16854 / JCM 12705 / C23).